Reading from the N-terminus, the 290-residue chain is MKKIIAITGPTASGKTSLSIKIAKKFNLEIINCDSTQIYQQYNIGTAKITKEEMEGVKHHLLDFLPPEEKYSIYHFQKSARAKIKDINNPLFVGGSGLYLKAALFDYELTPKPLMPQNVCEQDLQKMLAIIKEKDPQLVLDTKNPLRIISSYYDIVSGHLRSQKTKKNVPLYSLLIFYLDIDRKELKNRVVLRLEKMLNEGFVEEVKNIQTNFPQANFNIIGYREIKDFLEGKYSITEAKNKICQKTMQYAKRQKTWFKNQLQPVVVDALSPSLEKKVFQLVFDFLHKRS.

9 to 16 (GPTASGKT) provides a ligand contact to ATP. Residue 11–16 (TASGKT) coordinates substrate. The segment at 34-37 (DSTQ) is interaction with substrate tRNA.

It belongs to the IPP transferase family. Monomer. Requires Mg(2+) as cofactor.

The catalysed reaction is adenosine(37) in tRNA + dimethylallyl diphosphate = N(6)-dimethylallyladenosine(37) in tRNA + diphosphate. Functionally, catalyzes the transfer of a dimethylallyl group onto the adenine at position 37 in tRNAs that read codons beginning with uridine, leading to the formation of N6-(dimethylallyl)adenosine (i(6)A). This Phytoplasma australiense protein is tRNA dimethylallyltransferase.